The chain runs to 359 residues: DNA integrity scanning protein DisA (359 aa).

Positions 7–146 (DDIFRATLAA…GRRYVLDGSA (140 aa)) constitute a DAC domain. Residues Gly-74, Leu-92, and 105–109 (TRHRT) contribute to the ATP site.

This sequence belongs to the DisA family. Homooctamer. It depends on Mg(2+) as a cofactor.

The catalysed reaction is 2 ATP = 3',3'-c-di-AMP + 2 diphosphate. Its function is as follows. Participates in a DNA-damage check-point that is active prior to asymmetric division when DNA is damaged. DisA forms globular foci that rapidly scan along the chromosomes during sporulation, searching for lesions. When a lesion is present, DisA pauses at the lesion site. This triggers a cellular response that culminates in a temporary block in sporulation initiation. Functionally, also has diadenylate cyclase activity, catalyzing the condensation of 2 ATP molecules into cyclic di-AMP (c-di-AMP). c-di-AMP acts as a signaling molecule that couples DNA integrity with progression of sporulation. The rise in c-di-AMP level generated by DisA while scanning the chromosome, operates as a positive signal that advances sporulation; upon encountering a lesion, the DisA focus arrests at the damaged site and halts c-di-AMP synthesis. This chain is DNA integrity scanning protein DisA, found in Frankia alni (strain DSM 45986 / CECT 9034 / ACN14a).